The primary structure comprises 353 residues: Variable large protein 17 (353 aa).

The N-terminal stretch at 1-18 (MRKRISAIIMTLFMVLVS) is a signal peptide. Cys-19 carries N-palmitoyl cysteine lipidation. Cys-19 carries the S-diacylglycerol cysteine lipid modification. A disordered region spans residues 332 to 353 (EDKSVEATNTAEATTSGQQAKN). Polar residues predominate over residues 337–353 (EATNTAEATTSGQQAKN).

Belongs to the variable large protein (Vlp) family. Delta subfamily.

Its subcellular location is the cell outer membrane. The Vlp and Vsp proteins are antigenically distinct proteins, only one vlp or vsp gene is transcriptionally active at any one time. Switching between these genes is a mechanism of host immune response evasion. The chain is Variable large protein 17 from Borrelia hermsii.